We begin with the raw amino-acid sequence, 262 residues long: Phosphonates import ATP-binding protein PhnC (262 aa).

The 249-residue stretch at 5–253 folds into the ABC transporter domain; that stretch reads ICVEQLSKTF…RFDHLYRSIN (249 aa). Residue 37-44 participates in ATP binding; sequence GPSGSGKS.

This sequence belongs to the ABC transporter superfamily. Phosphonates importer (TC 3.A.1.9.1) family. As to quaternary structure, the complex is composed of two ATP-binding proteins (PhnC), two transmembrane proteins (PhnE) and a solute-binding protein (PhnD).

It is found in the cell inner membrane. It catalyses the reaction phosphonate(out) + ATP + H2O = phosphonate(in) + ADP + phosphate + H(+). Its function is as follows. Part of the ABC transporter complex PhnCDE involved in phosphonates import. Responsible for energy coupling to the transport system. This is Phosphonates import ATP-binding protein PhnC from Escherichia coli O157:H7.